Here is a 296-residue protein sequence, read N- to C-terminus: Coiled-coil domain-containing protein 69 (296 aa).

The segment covering 1 to 18 has biased composition (basic residues); sequence MGCRHSRLSSCKPPKKKR. The disordered stretch occupies residues 1-41; that stretch reads MGCRHSRLSSCKPPKKKRQEPEPEQPPRPEPHELGPLNGDT. Gly-2 carries the N-myristoyl glycine lipid modification. The segment covering 19–33 has biased composition (basic and acidic residues); that stretch reads QEPEPEQPPRPEPHE. Residues 48–272 adopt a coiled-coil conformation; that stretch reads CASEEAERHQ…QEKEELLYRV (225 aa). Phosphoserine occurs at positions 154 and 241.

Belongs to the CCDC69 family. Highly expressed in duodenum, esophagus, pancreas, prostate, salivary gland, thymus and urinary bladder.

The protein resides in the cytoplasm. The protein localises to the cytoskeleton. Its subcellular location is the spindle. It is found in the midbody. Its function is as follows. May act as a scaffold to regulate the recruitment and assembly of spindle midzone components. Required for the localization of AURKB and PLK1 to the spindle midzone. In Homo sapiens (Human), this protein is Coiled-coil domain-containing protein 69.